The chain runs to 82 residues: UPF0180 protein BALH_1248 (82 aa).

It belongs to the UPF0180 family.

The protein is UPF0180 protein BALH_1248 of Bacillus thuringiensis (strain Al Hakam).